We begin with the raw amino-acid sequence, 350 residues long: Biotin synthase (350 aa).

Residues 41–268 enclose the Radical SAM core domain; it reads NEVQISRLLS…KSRVRLSAGR (228 aa). [4Fe-4S] cluster-binding residues include C56, C60, and C63. Positions 100, 131, 191, and 263 each coordinate [2Fe-2S] cluster.

The protein belongs to the radical SAM superfamily. Biotin synthase family. Homodimer. The cofactor is [4Fe-4S] cluster. [2Fe-2S] cluster serves as cofactor.

It carries out the reaction (4R,5S)-dethiobiotin + (sulfur carrier)-SH + 2 reduced [2Fe-2S]-[ferredoxin] + 2 S-adenosyl-L-methionine = (sulfur carrier)-H + biotin + 2 5'-deoxyadenosine + 2 L-methionine + 2 oxidized [2Fe-2S]-[ferredoxin]. It participates in cofactor biosynthesis; biotin biosynthesis; biotin from 7,8-diaminononanoate: step 2/2. Functionally, catalyzes the conversion of dethiobiotin (DTB) to biotin by the insertion of a sulfur atom into dethiobiotin via a radical-based mechanism. The sequence is that of Biotin synthase from Shewanella sp. (strain ANA-3).